The sequence spans 1125 residues: Telomerase reverse transcriptase (1125 aa).

The tract at residues 1-239 is RNA-interacting domain 1; the sequence is MPRAPRCPAV…TKRLLSLTST (239 aa). Positions 58 to 205 are GQ motif; it reads VPWGSQPPPA…RPVGGNFTNL (148 aa). Residues 137–141 are required for regulating specificity for telomeric DNA and for processivity for primer elongation; sequence WMLLL. The span at 206 to 216 shows a compositional bias: polar residues; the sequence is GSAHQIKNSGH. Residues 206–304 form a disordered region; it reads GSAHQIKNSG…ASDPSLSGSV (99 aa). Residues 240 to 328 form a linker region; that stretch reads NVPSAKKARF…PPQDAEKLRP (89 aa). The span at 247–259 shows a compositional bias: basic and acidic residues; it reads ARFEPALRVDKGP. The segment covering 273-287 has biased composition (low complexity); the sequence is APSPAASPKVPPAAK. The interval 306 to 528 is required for oligomerization; that stretch reads CKHKPSSSSL…VPAAEHRLRE (223 aa). Residues 329-540 are RNA-interacting domain 2; that stretch reads FTETRHFLYS…LAMFLFWLMD (212 aa). The TFLY; involved in RNA binding motif lies at 332–337; that stretch reads TRHFLY. The tract at residues 381–511 is QFP motif; that stretch reads FCRTRRLPRR…VKVEDCHWLR (131 aa). The tract at residues 402 to 422 is CP motif; the sequence is LMNHAKCQYVRFLRSHCRFRT. A Phosphoserine; by DYRK2 modification is found at Ser-447. The Reverse transcriptase domain maps to 595 to 928; sequence EVKHHQDTWL…CLFPWCGLLL (334 aa). Phosphotyrosine; by SRC-type Tyr-kinases is present on Tyr-697. Positions 702, 861, and 862 each coordinate Mg(2+). The interval 907-921 is required for oligomerization; that stretch reads LGGAAPHQLPAHCLF. Residues 923 to 927 are primer grip sequence; the sequence is WCGLL. The interval 929-1125 is CTE; the sequence is DTRTLEVFCD…LSTDFQTILD (197 aa).

The protein belongs to the reverse transcriptase family. Telomerase subfamily. As to quaternary structure, catalytic component of the telomerase holoenzyme complex composed of one molecule of TERT, one molecule of WRAP53/TCAB1, two molecules of H/ACA ribonucleoprotein complex subunits DKC1, NOP10, NHP2 and GAR1, and a telomerase RNA template component (TERC). The telomerase holoenzyme complex is associated with TEP1, SMG6/EST1A and POT1. The molecular chaperone HSP90/P23 complex is required for correct assembly and stabilization of the active telomerase. Interacts directly with HSP90A and PTGES3. Interacts with HSPA1A; the interaction occurs in the absence of TERC and dissociates once the complex has formed. Interacts with RAN; the interaction promotes nuclear export of TERT. Interacts with XPO1. Interacts with PTPN11; the interaction retains TERT in the nucleus. Interacts with NCL (via RRM1 and C-terminal RRM4/Arg/Gly-rich domains); the interaction is important for nucleolar localization of TERT. Interacts with SMARCA4 (via the bromodomain); the interaction regulates Wnt-mediated signaling. Interacts with MCRS1 (isoform MCRS2); the interaction inhibits in vitro telomerase activity. Interacts with PIF1; the interaction has no effect on the elongation activity of TERT. Interacts with PML; the interaction recruits TERT to PML bodies and inhibits telomerase activity. Interacts with GNL3L. Interacts with isoform 1 and isoform 2 of NVL. Interacts with DHX36. Interacts with ATF7. Post-translationally, phosphorylation at Tyr-697 under oxidative stress leads to translocation of TERT to the cytoplasm and reduces its antiapoptotic activity. Dephosphorylated by SHP2/PTPN11 leading to nuclear retention. Phosphorylation at the G2/M phase at Ser-447 by DYRK2 promotes ubiquitination by the EDVP complex and degradation. In terms of processing, ubiquitinated by the EDVP complex, a E3 ligase complex following phosphorylation at Ser-447 by DYRK2. Ubiquitinated leads to proteasomal degradation. As to expression, isoform 1 and isoform 2 expressed in thymus, liver, spleen, lung, kidney and testis. High level of inactive isoform 3 in adult hippocampus, low level in heart, cortex and cerebellum.

The protein resides in the nucleus. It localises to the nucleolus. Its subcellular location is the nucleoplasm. The protein localises to the chromosome. It is found in the telomere. The protein resides in the cytoplasm. It localises to the PML body. It catalyses the reaction DNA(n) + a 2'-deoxyribonucleoside 5'-triphosphate = DNA(n+1) + diphosphate. Functionally, telomerase is a ribonucleoprotein enzyme essential for the replication of chromosome termini in most eukaryotes. Active in progenitor and cancer cells. Inactive, or very low activity, in normal somatic cells. Catalytic component of the teleromerase holoenzyme complex whose main activity is the elongation of telomeres by acting as a reverse transcriptase that adds simple sequence repeats to chromosome ends by copying a template sequence within the RNA component of the enzyme. Catalyzes the RNA-dependent extension of 3'-chromosomal termini with the 6-nucleotide telomeric repeat unit, 5'-TTAGGG-3'. The catalytic cycle involves primer binding, primer extension and release of product once the template boundary has been reached or nascent product translocation followed by further extension. More active on substrates containing 2 or 3 telomeric repeats. Telomerase activity is regulated by a number of factors including telomerase complex-associated proteins, chaperones and polypeptide modifiers. Modulates Wnt signaling. Plays important roles in aging and antiapoptosis. The protein is Telomerase reverse transcriptase of Rattus norvegicus (Rat).